The following is a 260-amino-acid chain: Ribosomal RNA small subunit methyltransferase J (260 aa).

S-adenosyl-L-methionine contacts are provided by residues 108-109 (RD), 124-125 (ER), and Asp178.

It belongs to the methyltransferase superfamily. RsmJ family.

The protein resides in the cytoplasm. It carries out the reaction guanosine(1516) in 16S rRNA + S-adenosyl-L-methionine = N(2)-methylguanosine(1516) in 16S rRNA + S-adenosyl-L-homocysteine + H(+). Its function is as follows. Specifically methylates the guanosine in position 1516 of 16S rRNA. This chain is Ribosomal RNA small subunit methyltransferase J, found in Ectopseudomonas mendocina (strain ymp) (Pseudomonas mendocina).